We begin with the raw amino-acid sequence, 313 residues long: Sororin-like protein 1 (313 aa).

The FGF motif signature appears at phenylalanine 44–phenylalanine 46. Positions alanine 105–glycine 287 are disordered. Residues glutamate 107 to alanine 118 are compositionally biased toward polar residues. A compositionally biased stretch (pro residues) spans proline 123–proline 134. Residues proline 135–leucine 154 are compositionally biased toward low complexity. Positions glutamine 155–proline 170 are enriched in polar residues. Over residues histidine 184–arginine 196 the composition is skewed to basic residues. Over residues glutamate 249–alanine 264 the composition is skewed to basic and acidic residues. The interval lysine 288–valine 310 is C-terminal Sororin domain.

It belongs to the sororin family. In terms of assembly, interacts with Pds5 and Psm3.

It is found in the nucleus. Regulator of sister chromatid cohesion in mitosis stabilizing cohesin complex association with chromatin. Antagonizes the action of wpl1 which stimulates cohesin dissociation from chromatin. Cohesion ensures that chromosome partitioning is accurate in dividing cells and may play an important role in DNA repair. This chain is Sororin-like protein 1, found in Schizosaccharomyces pombe (strain 972 / ATCC 24843) (Fission yeast).